The sequence spans 98 residues: NADH-ubiquinone oxidoreductase chain 4L (98 aa).

The next 3 membrane-spanning stretches (helical) occupy residues 1–21 (MTAI…GVLV), 29–49 (TLLC…LLIT), and 59–79 (LPLT…ALLV).

It belongs to the complex I subunit 4L family. As to quaternary structure, core subunit of respiratory chain NADH dehydrogenase (Complex I) which is composed of 45 different subunits.

The protein resides in the mitochondrion inner membrane. The enzyme catalyses a ubiquinone + NADH + 5 H(+)(in) = a ubiquinol + NAD(+) + 4 H(+)(out). Core subunit of the mitochondrial membrane respiratory chain NADH dehydrogenase (Complex I) which catalyzes electron transfer from NADH through the respiratory chain, using ubiquinone as an electron acceptor. Part of the enzyme membrane arm which is embedded in the lipid bilayer and involved in proton translocation. In Notoryctes typhlops (Southern marsupial mole), this protein is NADH-ubiquinone oxidoreductase chain 4L (MT-ND4L).